The primary structure comprises 469 residues: Rubisco accumulation factor 1, chloroplastic (469 aa).

The transit peptide at 1–46 (MLSLSHPHPHPASTTAAAAARHHHRRNAPFAPHHRRRRRFAHLTTS) directs the protein to the chloroplast. The tract at residues 1-78 (MLSLSHPHPH…TPPPTAPPDQ (78 aa)) is disordered. The span at 20 to 41 (ARHHHRRNAPFAPHHRRRRRFA) shows a compositional bias: basic residues. The N-terminal alpha-helix stretch occupies residues 90 to 281 (LPDKYKDLDL…PARARVEAEL (192 aa)). Residues 246–294 (RQSREAIDAEDSVAELERALEVVDTEPARARVEAELDRARRKAAGEEVD) adopt a coiled-coil conformation. A C-terminal beta sheet region spans residues 311–456 (VPVVRLMYGE…AEVLVVVRPP (146 aa)).

The protein belongs to the RAF family.

Its subcellular location is the plastid. It localises to the chloroplast. Functionally, required for assembly or stability of RuBisCO. Acts at a postchaperonin step to fold and/or assemble the large subunit (LS) into RuBisCO. The chain is Rubisco accumulation factor 1, chloroplastic (RAF1) from Oryza sativa subsp. japonica (Rice).